Here is a 306-residue protein sequence, read N- to C-terminus: MPSKEKIVVIAGPTGVGKSASTLPLAREFGGEIISADAVSVYRCLDIGAAKPGMEDRRLVPHHMIDVVDPDEDFDANIYAAQARAIAQSLHESDKRVFVDGGTGFYIKALLYGLFTEGRSDPELRDSLRREAAQLGSHALHDRLKDLDPPSAKRIHPNDAYRITRALEICILTGKPASAQQAAHGFEESPYDVLFFCLHREREILYQRTDQRVDQMLAMGLEQEVRGLLENGYGPELKSMQSIGYRHMCQYITGALNYEDAVTLMKRDTRRLAKRQMTWFKAYPEIRWMAPDETEAMRREISLFLE.

Residue 12 to 19 coordinates ATP; that stretch reads GPTGVGKS. 14–19 is a binding site for substrate; it reads TGVGKS.

The protein belongs to the IPP transferase family. In terms of assembly, monomer. Mg(2+) is required as a cofactor.

It carries out the reaction adenosine(37) in tRNA + dimethylallyl diphosphate = N(6)-dimethylallyladenosine(37) in tRNA + diphosphate. In terms of biological role, catalyzes the transfer of a dimethylallyl group onto the adenine at position 37 in tRNAs that read codons beginning with uridine, leading to the formation of N6-(dimethylallyl)adenosine (i(6)A). In Desulfatibacillum aliphaticivorans, this protein is tRNA dimethylallyltransferase.